A 503-amino-acid chain; its full sequence is Aspartyl/glutamyl-tRNA(Asn/Gln) amidotransferase subunit B (503 aa).

It belongs to the GatB/GatE family. GatB subfamily. In terms of assembly, heterotrimer of A, B and C subunits.

The catalysed reaction is L-glutamyl-tRNA(Gln) + L-glutamine + ATP + H2O = L-glutaminyl-tRNA(Gln) + L-glutamate + ADP + phosphate + H(+). It carries out the reaction L-aspartyl-tRNA(Asn) + L-glutamine + ATP + H2O = L-asparaginyl-tRNA(Asn) + L-glutamate + ADP + phosphate + 2 H(+). Allows the formation of correctly charged Asn-tRNA(Asn) or Gln-tRNA(Gln) through the transamidation of misacylated Asp-tRNA(Asn) or Glu-tRNA(Gln) in organisms which lack either or both of asparaginyl-tRNA or glutaminyl-tRNA synthetases. The reaction takes place in the presence of glutamine and ATP through an activated phospho-Asp-tRNA(Asn) or phospho-Glu-tRNA(Gln). The polypeptide is Aspartyl/glutamyl-tRNA(Asn/Gln) amidotransferase subunit B (Mycolicibacterium smegmatis (strain ATCC 700084 / mc(2)155) (Mycobacterium smegmatis)).